A 309-amino-acid polypeptide reads, in one-letter code: 2-oxoacid:ferredoxin oxidoreductase 2, subunit beta (309 aa).

Cys-17, Cys-20, and Cys-51 together coordinate [4Fe-4S] cluster. Thiamine diphosphate is bound by residues 49–52 and His-68; that span reads IGCS. Asp-93 lines the Mg(2+) pocket. 94–95 provides a ligand contact to thiamine diphosphate; it reads GD. Mg(2+) contacts are provided by Asn-121 and Val-123. 125–126 is a binding site for thiamine diphosphate; it reads GL. Cys-200 contacts [4Fe-4S] cluster.

Heterodimer composed of an alpha and a beta subunit. Requires [4Fe-4S] cluster as cofactor. It depends on thiamine diphosphate as a cofactor. Mg(2+) is required as a cofactor.

It carries out the reaction a 2-oxocarboxylate + 2 oxidized [2Fe-2S]-[ferredoxin] + CoA = an acyl-CoA + 2 reduced [2Fe-2S]-[ferredoxin] + CO2 + H(+). In terms of biological role, catalyzes the coenzyme A-dependent oxidative decarboxylation of different 2-oxoacids such as pyruvate, 2-oxobutyrate, glyoxylate and 2-oxoglutarate to form their CoA derivatives. This is 2-oxoacid:ferredoxin oxidoreductase 2, subunit beta from Aeropyrum pernix (strain ATCC 700893 / DSM 11879 / JCM 9820 / NBRC 100138 / K1).